We begin with the raw amino-acid sequence, 491 residues long: Iota-carrageenase (491 aa).

A signal peptide spans 1-19; that stretch reads MKLQFKPVYLASIAIMAIG. A disulfide bridge links Cys422 with Cys490.

The protein belongs to the glycosyl hydrolase 82 family.

It is found in the secreted. The enzyme catalyses Endohydrolysis of 1,4-beta-D-linkages between D-galactose 4-sulfate and 3,6-anhydro-D-galactose-2-sulfate in iota-carrageenans.. Hydrolyzes iota-carrageenans, sulfated 1,3-alpha-1,4-beta galactans from red algal cell walls, with an inversion of anomeric configuration. Also active against hybrid iota-/nu-carrageenan, not active against kappa- or lambda-carrageenans. The protein is Iota-carrageenase of Zobellia galactanivorans (strain DSM 12802 / CCUG 47099 / CIP 106680 / NCIMB 13871 / Dsij).